Reading from the N-terminus, the 977-residue chain is Glutamate receptor 2 (977 aa).

The first 19 residues, 1–19 (MNKNLLVFGFLIFVKIGET), serve as a signal peptide directing secretion. Residues 20-621 (SKKFPLRAFV…FSFMEPLGMT (602 aa)) lie on the Extracellular side of the membrane. Residues N36, N227, N291, N427, N532, and N566 are each glycosylated (N-linked (GlcNAc...) asparagine). A helical membrane pass occupies residues 622 to 642 (IWIFTLSSYFGVSLTIFLVSW). The Cytoplasmic segment spans residues 643–695 (FSPYEKRIEFKRGEFTVTNEFTLYNSLWFTLAAFMQQGTDILPRAVSGRIASS). Residues 696–716 (CWWFFTLIIVSSYTANLAAFL) traverse the membrane as a helical segment. Residues 717 to 898 (TLERMTPPIE…GTSSSLNLSK (182 aa)) lie on the Extracellular side of the membrane. 2 N-linked (GlcNAc...) asparagine glycosylation sites follow: N783 and N895. A helical membrane pass occupies residues 899–919 (VAGIFYILLAGMVLSMCTALV). Residues 920–977 (EFLFRKNKENREKERNRMRSSRPLKPGILASCERAKQKQLQNRRTKSEEVSTPRSTLF) lie on the Cytoplasmic side of the membrane. A disordered region spans residues 954–977 (AKQKQLQNRRTKSEEVSTPRSTLF).

The protein belongs to the glutamate-gated ion channel (TC 1.A.10.1) family. Command interneurons of the locomotory control circuit (AIA, AIB, AVA, AVD, AVE, PVC, RIA, RIG and RIR) and motor neurons (AVG, M1, RMDD and RMDV).

The protein localises to the membrane. The protein resides in the postsynaptic cell membrane. L-glutamate acts as an excitatory neurotransmitter at many synapses in the central nervous system. The postsynaptic actions of glutamate are mediated by a variety of receptors that are named according to their selective agonists. Required for response to mechanical and osmotic stimuli. The chain is Glutamate receptor 2 (glr-2) from Caenorhabditis elegans.